The sequence spans 88 residues: Co-chaperonin GroES (88 aa).

It belongs to the GroES chaperonin family. Heptamer of 7 subunits arranged in a ring. Interacts with the chaperonin GroEL.

It is found in the cytoplasm. Its function is as follows. Together with the chaperonin GroEL, plays an essential role in assisting protein folding. The GroEL-GroES system forms a nano-cage that allows encapsulation of the non-native substrate proteins and provides a physical environment optimized to promote and accelerate protein folding. GroES binds to the apical surface of the GroEL ring, thereby capping the opening of the GroEL channel. The chain is Co-chaperonin GroES from Treponema pallidum (strain Nichols).